The sequence spans 373 residues: MEGKEGPSCEVRLPTPGAEREGPIHPELGAFGETASNTIKLSESSNDGKKEEIEEELDPRIQEELERLNQASEEINLLELQLDEARTAYRRILTESARRLNGLATQLGACIDKARPYYEARRLAKEAQQDTHSAALRYERAVSMHAAAREMVFVAEQGVTADKNRLDPTWQEMLNHATCKVNEAEEERLRSEFEHQRVTRQCHEAEAKVQTLQKSLKRFIIKSRPYFELKSQLNTILEEHKSRVTSLENSVAQAKLRYSGTLRNLEQISEEIHARRTQSSLLSQRAPPLGAEAPPSVKDGETGPPADTVSLLSLQTIASDLQKSDSVEHLRDLTDVTSLDGRETGAVECGGSRERGGDRGTGGAFRHHRSVSL.

The disordered stretch occupies residues 1 to 53; that stretch reads MEGKEGPSCEVRLPTPGAEREGPIHPELGAFGETASNTIKLSESSNDGKKEEI. Over residues 34-45 the composition is skewed to polar residues; it reads TASNTIKLSESS. Coiled-coil stretches lie at residues 55–98 and 170–272; these read EELD…ESAR and WQEM…SEEI. Disordered regions lie at residues 276-305 and 344-373; these read RTQS…TGPP and TGAV…SVSL. The span at 344-358 shows a compositional bias: basic and acidic residues; the sequence is TGAVECGGSRERGGD.

Belongs to the SH3BP5 family.

Its function is as follows. Functions as a guanine nucleotide exchange factor (GEF) for rab11a. This Xenopus tropicalis (Western clawed frog) protein is SH3 domain-binding protein 5-like (sh3bp5l).